We begin with the raw amino-acid sequence, 838 residues long: Envelope glycoprotein H (838 aa).

The N-terminal stretch at 1–18 (MGNGLWFVGVIILGVAWG) is a signal peptide. Residues 19 to 803 (QVHDWTEQTD…DTQPVAAIAP (785 aa)) are Virion surface-facing. 2 N-linked (GlcNAc...) asparagine; by host glycosylation sites follow: Asn73 and Asn120. A disordered region spans residues 174–204 (FPRGDNVATASHPSGPRDTPPPRPPVGARRH). Residue Asn216 is glycosylated (N-linked (GlcNAc...) asparagine; by host). The tract at residues 259-323 (DAALVRARYG…PGGPRYRVFV (65 aa)) is interaction with gL. Residues Asn332, Asn437, Asn670, and Asn784 are each glycosylated (N-linked (GlcNAc...) asparagine; by host). Residues 804–824 (GFLAASALGVVMITAALAGIL) form a helical membrane-spanning segment. The Intravirion portion of the chain corresponds to 825 to 838 (KVLRTSVPFFWRRE).

Belongs to the herpesviridae glycoprotein H family. As to quaternary structure, interacts with glycoprotein L (gL); this interaction is necessary for the correct processing and cell surface expression of gH. The heterodimer gH/gL seems to interact with gB trimers during fusion. Associates with the gB-gH/gL-gD complex. Interacts with VP16. N-glycosylated, O-glycosylated, and sialylated.

Its subcellular location is the virion membrane. It localises to the host cell membrane. It is found in the host endosome membrane. In terms of biological role, the heterodimer glycoprotein H-glycoprotein L is required for the fusion of viral and plasma membranes leading to virus entry into the host cell. Following initial binding to host receptor, membrane fusion is mediated by the fusion machinery composed of gB and the heterodimer gH/gL. May also be involved in the fusion between the virion envelope and the outer nuclear membrane during virion morphogenesis. The polypeptide is Envelope glycoprotein H (Human herpesvirus 1 (strain 17) (HHV-1)).